The chain runs to 117 residues: Snaclec CHH-B subunit beta (117 aa).

3 disulfide bridges follow: Cys-2-Cys-13, Cys-30-Cys-115, and Cys-92-Cys-107. Residues 9-116 enclose the C-type lectin domain; the sequence is YEGHCYRVFQ…CSKTHNVVCK (108 aa).

Belongs to the snaclec family. As to quaternary structure, heterodimer of subunits alpha and beta; disulfide-linked. Expressed by the venom gland.

It is found in the secreted. Functionally, binds to the subunit GPIbalpha (GP1BA) of the platelet GPIb/V/IX receptor system. It inhibits ristocetin- and vWF-induced platelet aggregation in platelet-rich plasma by inhibiting the binding of vWF to GPIbalpha. The chain is Snaclec CHH-B subunit beta from Crotalus horridus (Timber rattlesnake).